The sequence spans 509 residues: Circadian clock oscillator protein KaiC (509 aa).

KaiC domains follow at residues M1–F243 and I257–N509. ATP is bound by residues G45, T46, G47, K48, T49, S85, K220, L221, R222, T224, H226, D237, T286, G287, T288, G289, K290, and T291. T49 serves as a coordination point for Mg(2+). The Mg(2+) site is built by T291 and E314. W327 is a binding site for ATP. S427 bears the Phosphoserine; by autocatalysis mark. Position 428 is a phosphothreonine; by autocatalysis (T428). 7 residues coordinate ATP: R447, K453, M454, R455, S457, H459, and K461.

This sequence belongs to the KaiC family. Homohexamer; hexamerization is dependent on ATP-binding. Component of the KaiBC complex. KaiC interacts with SasA, activating its autokinase function and leading to RpaA activation. Requires Mg(2+) as cofactor. In terms of processing, phosphorylated on serine and threonine residues by autocatalysis. Has a 4 step phosphorylation cycle; the autokinase acts first on Thr-428, then Ser-427. When Ser-427 is modified KaiC switches to an autophosphatase mode, acting first on phospho-Thr-428 then phospho-Ser-427.

The catalysed reaction is L-seryl-[protein] + ATP = O-phospho-L-seryl-[protein] + ADP + H(+). It carries out the reaction L-threonyl-[protein] + ATP = O-phospho-L-threonyl-[protein] + ADP + H(+). The enzyme catalyses ATP + H2O = ADP + phosphate + H(+). Its function is as follows. Central component of the KaiBC oscillator complex, which constitutes the main circadian regulator in cyanobacteria. Its composition changes during the circadian cycle to control KaiC phosphorylation. Autophosphorylates and has a weak ATPase activity; ATPase activity defines the circadian period. This chain is Circadian clock oscillator protein KaiC, found in Prochlorococcus marinus subsp. pastoris (strain CCMP1986 / NIES-2087 / MED4).